The primary structure comprises 128 residues: Secreted RxLR effector protein 57 (128 aa).

The signal sequence occupies residues 1-31; it reads MHRKRLRVVLSATLLDLITCVQLMLDPLVRS. The RxLR signature appears at 58–61; that stretch reads RILR.

Belongs to the RxLR effector family.

It localises to the secreted. It is found in the host nucleus. Its subcellular location is the host cytoplasm. Secreted effector that completely suppresses the host cell death induced by cell death-inducing proteins. The protein is Secreted RxLR effector protein 57 of Plasmopara viticola (Downy mildew of grapevine).